The chain runs to 193 residues: Adenylate kinase (193 aa).

11–16 (GAGKGT) is an ATP binding site. The tract at residues 31–60 (STGDLLRAEVKAQTPLGCQAKVYMDAGELV) is NMP. AMP is bound by residues T32, R37, 58-60 (ELV), 85-88 (GFPR), and Q92. The interval 126-136 (ARGKEQGRSDD) is LID. Residue R127 participates in ATP binding. AMP contacts are provided by R133 and R145. An ATP-binding site is contributed by Q173.

The protein belongs to the adenylate kinase family. As to quaternary structure, monomer.

Its subcellular location is the cytoplasm. It catalyses the reaction AMP + ATP = 2 ADP. Its pathway is purine metabolism; AMP biosynthesis via salvage pathway; AMP from ADP: step 1/1. In terms of biological role, catalyzes the reversible transfer of the terminal phosphate group between ATP and AMP. Plays an important role in cellular energy homeostasis and in adenine nucleotide metabolism. This chain is Adenylate kinase, found in Synechococcus sp. (strain JA-2-3B'a(2-13)) (Cyanobacteria bacterium Yellowstone B-Prime).